A 345-amino-acid polypeptide reads, in one-letter code: Fructose-1,6-bisphosphatase class 1 2 (345 aa).

4 residues coordinate Mg(2+): glutamate 90, aspartate 109, leucine 111, and aspartate 112. Residues 112–115 (DGSS) and asparagine 200 contribute to the substrate site. Glutamate 272 provides a ligand contact to Mg(2+).

It belongs to the FBPase class 1 family. As to quaternary structure, homotetramer. Mg(2+) is required as a cofactor.

The protein localises to the cytoplasm. It carries out the reaction beta-D-fructose 1,6-bisphosphate + H2O = beta-D-fructose 6-phosphate + phosphate. It participates in carbohydrate biosynthesis; gluconeogenesis. The protein is Fructose-1,6-bisphosphatase class 1 2 of Nitrobacter hamburgensis (strain DSM 10229 / NCIMB 13809 / X14).